We begin with the raw amino-acid sequence, 366 residues long: tRNA(Met) cytidine acetate ligase (366 aa).

Residues 7 to 20, glycine 96, asparagine 152, and arginine 175 contribute to the ATP site; that span reads IAEF…HKYL.

Belongs to the TmcAL family.

It localises to the cytoplasm. The catalysed reaction is cytidine(34) in elongator tRNA(Met) + acetate + ATP = N(4)-acetylcytidine(34) in elongator tRNA(Met) + AMP + diphosphate. Its function is as follows. Catalyzes the formation of N(4)-acetylcytidine (ac(4)C) at the wobble position of elongator tRNA(Met), using acetate and ATP as substrates. First activates an acetate ion to form acetyladenylate (Ac-AMP) and then transfers the acetyl group to tRNA to form ac(4)C34. This Streptococcus mutans serotype c (strain ATCC 700610 / UA159) protein is tRNA(Met) cytidine acetate ligase.